The sequence spans 493 residues: Protein nucleotidyltransferase YdiU (493 aa).

ATP contacts are provided by G94, G96, R97, K117, D129, G130, R180, and R187. The Proton acceptor role is filled by D256. Mg(2+) is bound by residues N257 and D266. D266 contacts ATP.

It belongs to the SELO family. The cofactor is Mg(2+). Requires Mn(2+) as cofactor.

The catalysed reaction is L-seryl-[protein] + ATP = 3-O-(5'-adenylyl)-L-seryl-[protein] + diphosphate. It catalyses the reaction L-threonyl-[protein] + ATP = 3-O-(5'-adenylyl)-L-threonyl-[protein] + diphosphate. The enzyme catalyses L-tyrosyl-[protein] + ATP = O-(5'-adenylyl)-L-tyrosyl-[protein] + diphosphate. It carries out the reaction L-histidyl-[protein] + UTP = N(tele)-(5'-uridylyl)-L-histidyl-[protein] + diphosphate. The catalysed reaction is L-seryl-[protein] + UTP = O-(5'-uridylyl)-L-seryl-[protein] + diphosphate. It catalyses the reaction L-tyrosyl-[protein] + UTP = O-(5'-uridylyl)-L-tyrosyl-[protein] + diphosphate. Nucleotidyltransferase involved in the post-translational modification of proteins. It can catalyze the addition of adenosine monophosphate (AMP) or uridine monophosphate (UMP) to a protein, resulting in modifications known as AMPylation and UMPylation. The polypeptide is Protein nucleotidyltransferase YdiU (Hahella chejuensis (strain KCTC 2396)).